The chain runs to 160 residues: Cytochrome b6-f complex subunit 4 (160 aa).

The next 3 membrane-spanning stretches (helical) occupy residues Leu36–Val56, Leu95–Glu115, and Thr131–Ile151.

Belongs to the cytochrome b family. PetD subfamily. The 4 large subunits of the cytochrome b6-f complex are cytochrome b6, subunit IV (17 kDa polypeptide, petD), cytochrome f and the Rieske protein, while the 4 small subunits are petG, petL, petM and petN. The complex functions as a dimer.

It localises to the plastid. The protein localises to the chloroplast thylakoid membrane. Its function is as follows. Component of the cytochrome b6-f complex, which mediates electron transfer between photosystem II (PSII) and photosystem I (PSI), cyclic electron flow around PSI, and state transitions. The sequence is that of Cytochrome b6-f complex subunit 4 from Tupiella akineta (Green alga).